Here is a 396-residue protein sequence, read N- to C-terminus: Tail sheath protein (396 aa).

It belongs to the myoviridae tail sheath protein family. As to quaternary structure, homomultimer.

It is found in the virion. The protein localises to the host cytoplasm. Its function is as follows. Polymerizes as an extended helical structure around the baseplate-tail tube complex. During ejection, the sheath shifts to a contracted form, thereby making the inner tail tube protrude through the host cell envelope. In Enterobacteriaceae (Bacteriophage P2), this protein is Tail sheath protein (FI).